The following is a 115-amino-acid chain: Large ribosomal subunit protein bL20 (115 aa).

The protein belongs to the bacterial ribosomal protein bL20 family.

In terms of biological role, binds directly to 23S ribosomal RNA and is necessary for the in vitro assembly process of the 50S ribosomal subunit. It is not involved in the protein synthesizing functions of that subunit. This chain is Large ribosomal subunit protein bL20, found in Synechococcus sp. (strain WH7803).